The primary structure comprises 161 residues: Phosphopantetheine adenylyltransferase (161 aa).

Ser10 provides a ligand contact to substrate. Residues 10-11 (SF) and His18 contribute to the ATP site. Residues Lys42, Ala75, and Arg89 each coordinate substrate. ATP-binding positions include 90 to 92 (GLR), Glu100, and 125 to 131 (LSPISSS).

The protein belongs to the bacterial CoaD family. Homohexamer. Requires Mg(2+) as cofactor.

It localises to the cytoplasm. It catalyses the reaction (R)-4'-phosphopantetheine + ATP + H(+) = 3'-dephospho-CoA + diphosphate. It functions in the pathway cofactor biosynthesis; coenzyme A biosynthesis; CoA from (R)-pantothenate: step 4/5. In terms of biological role, reversibly transfers an adenylyl group from ATP to 4'-phosphopantetheine, yielding dephospho-CoA (dPCoA) and pyrophosphate. The chain is Phosphopantetheine adenylyltransferase from Streptococcus agalactiae serotype III (strain NEM316).